Here is a 461-residue protein sequence, read N- to C-terminus: Cysteine--tRNA ligase (461 aa).

Cys-28 provides a ligand contact to Zn(2+). The 'HIGH' region signature appears at 30 to 40; sequence VTIYDLCHIGH. Zn(2+) contacts are provided by Cys-209, His-234, and Glu-238. A 'KMSKS' region motif is present at residues 266 to 270; the sequence is KMSKS. An ATP-binding site is contributed by Lys-269.

This sequence belongs to the class-I aminoacyl-tRNA synthetase family. Monomer. It depends on Zn(2+) as a cofactor.

The protein resides in the cytoplasm. The enzyme catalyses tRNA(Cys) + L-cysteine + ATP = L-cysteinyl-tRNA(Cys) + AMP + diphosphate. The chain is Cysteine--tRNA ligase from Hamiltonella defensa subsp. Acyrthosiphon pisum (strain 5AT).